Here is a 107-residue protein sequence, read N- to C-terminus: Somatoliberin (107 aa).

The first 19 residues, 1–19 (MPLWVFFVILTLTNGSHCS), serve as a signal peptide directing secretion. Residues 20-30 (PSPSLPFRIRR) constitute a propeptide that is removed on maturation. Leucine amide is present on L74. Positions 77–107 (QVDSMWADHRQMSLESLLAALLQKHSRDSQG) are excised as a propeptide.

This sequence belongs to the glucagon family.

The protein resides in the secreted. GRF is released by the hypothalamus and acts on the adenohypophyse to stimulate the secretion of growth hormone. This Mesocricetus auratus (Golden hamster) protein is Somatoliberin (GHRH).